The sequence spans 1698 residues: Protein DOP1 (1698 aa).

Ser244 bears the Phosphoserine mark.

This sequence belongs to the DOP1 family. As to quaternary structure, interacts with MON2.

The protein localises to the golgi apparatus membrane. Required for traffic between late Golgi and early endosomes, and for the normal structure and organization of the endoplasmic reticulum. Required for normal cellular morphogenesis. In Saccharomyces cerevisiae (strain ATCC 204508 / S288c) (Baker's yeast), this protein is Protein DOP1 (DOP1).